Consider the following 1106-residue polypeptide: Probable ATP-citrate synthase (1106 aa).

Residues Asn358, Thr360, and Arg391 each coordinate citrate. The segment covering 442–459 has biased composition (polar residues); that stretch reads APQTTGQFLLSPERNTGG. The disordered stretch occupies residues 442-478; that stretch reads APQTTGQFLLSPERNTGGTERAPPSPAANATPTEHPL. ATP is bound by residues 701 to 721 and 752 to 778; these read VIRY…EVGG and ITSE…KNAA. Mg(2+) is bound at residue Glu718. Residue His760 is the Tele-phosphohistidine intermediate of the active site. 779–789 is a binding site for CoA; that stretch reads LRASGALVPES.

It in the N-terminal section; belongs to the succinate/malate CoA ligase beta subunit family. The protein in the C-terminal section; belongs to the succinate/malate CoA ligase alpha subunit family. In terms of assembly, homotetramer.

The protein localises to the cytoplasm. The enzyme catalyses oxaloacetate + acetyl-CoA + ADP + phosphate = citrate + ATP + CoA. In terms of biological role, catalyzes the cleavage of citrate into oxaloacetate and acetyl-CoA, the latter serving as common substrate in multiple biochemical reactions in protein, carbohydrate and lipid metabolism. The chain is Probable ATP-citrate synthase from Caenorhabditis elegans.